We begin with the raw amino-acid sequence, 735 residues long: uncharacterized protein (735 aa).

Residues 25 to 175 (DLSCLSPDLL…CIAAVLAGLL (151 aa)) enclose the GAF domain. The 71-residue stretch at 185–255 (SEAARRAMLD…RQGFMRHLAT (71 aa)) folds into the PAS domain. Residues 263–313 (RLVEVEALRADGSVFPAELTVNEHRAGGRRLFSAFVRDISDRITSRRALER) enclose the PAC domain. The region spanning 342–464 (GAVVLMLRDL…DGHLLHFAEH (123 aa)) is the GGDEF domain. Residues 472-732 (RLELEMALRD…VAGTLPETLA (261 aa)) enclose the EAL domain.

This is an uncharacterized protein from Azorhizobium caulinodans (strain ATCC 43989 / DSM 5975 / JCM 20966 / LMG 6465 / NBRC 14845 / NCIMB 13405 / ORS 571).